Consider the following 103-residue polypeptide: Large ribosomal subunit protein bL21 (103 aa).

Belongs to the bacterial ribosomal protein bL21 family. As to quaternary structure, part of the 50S ribosomal subunit. Contacts protein L20.

Its function is as follows. This protein binds to 23S rRNA in the presence of protein L20. The chain is Large ribosomal subunit protein bL21 from Amoebophilus asiaticus (strain 5a2).